We begin with the raw amino-acid sequence, 839 residues long: Taste receptor type 1 member 2 (839 aa).

The signal sequence occupies residues 1–19 (MGPRATTICSLFFLLWVLA). Residues 20 to 566 (EPAENSDFYL…AFLEWHEAPT (547 aa)) lie on the Extracellular side of the membrane. N-linked (GlcNAc...) asparagine glycosylation is found at Asn84, Asn248, Asn292, Asn312, Asn368, Asn428, Asn487, and Asn527. A helical transmembrane segment spans residues 567–587 (IAVALLAALGFLSTLAILVIF). The Cytoplasmic portion of the chain corresponds to 588–602 (WRHFQTPMVRSAGGP). A helical membrane pass occupies residues 603 to 623 (MCFLMLTLLLVAYMVVPVYVG). The Extracellular portion of the chain corresponds to 624-635 (PPKVSTCLCRQA). A helical membrane pass occupies residues 636 to 656 (LFPLCFTICISCIAVRSFQII). At 657–681 (CAFKMASRFPRAYSYWVRYQGPYVS) the chain is on the cytoplasmic side. The helical transmembrane segment at 682 to 702 (MAFITVLKMVIVVIGMLATGL) threads the bilayer. Topologically, residues 703-727 (NPTTRTDPDDPKIMIVSCNPNYRNS) are extracellular. A helical transmembrane segment spans residues 728 to 748 (LLFNTSLDLLLSVVGFSFANM). The Cytoplasmic segment spans residues 749–760 (GKELPTNYNEAK). Residues 761-781 (FITLSMTFYFTSSISLCTFMS) form a helical membrane-spanning segment. Over 782-784 (AYS) the chain is Extracellular. Residues 785–805 (GVLVTIVDLLVTVLNLLAISL) form a helical membrane-spanning segment. The Cytoplasmic segment spans residues 806-839 (GYFGPKCYMILFYPERNTPAYFNSVIQGYTMTRD).

It belongs to the G-protein coupled receptor 3 family. TAS1R subfamily. In terms of assembly, forms heterodimers with TAS1R3.

Its subcellular location is the cell membrane. Its function is as follows. Putative taste receptor. TAS1R2/TAS1R3 recognizes diverse natural and synthetic sweeteners. In Pongo pygmaeus (Bornean orangutan), this protein is Taste receptor type 1 member 2 (TAS1R2).